A 186-amino-acid chain; its full sequence is MATLDAIREALPEPARDIKLNLQAVLQPGTLTPAQRWGVAVATAAAARNERLLAAVLADARAEVEPAVVEDALAAAAVMAMNNVYYRFRHMVGKASYAEKPARLRMNRLVKPAASKVDFELFALAVSAVNGCETCVRSHEQVVVAGGLSEDQVHEAVRIAAVLHAAAVSLELAGYAAVPSAAAAAG.

Residue Cys132 is the Proton donor of the active site. Cys132 and Cys135 are disulfide-bonded. Cys135 acts as the Cysteine sulfenic acid (-SOH) intermediate in catalysis.

This sequence belongs to the AhpD family.

The catalysed reaction is N(6)-[(R)-dihydrolipoyl]-L-lysyl-[lipoyl-carrier protein] + a hydroperoxide = N(6)-[(R)-lipoyl]-L-lysyl-[lipoyl-carrier protein] + an alcohol + H2O. Functionally, antioxidant protein with alkyl hydroperoxidase activity. Required for the reduction of the AhpC active site cysteine residues and for the regeneration of the AhpC enzyme activity. The sequence is that of Alkyl hydroperoxide reductase AhpD from Anaeromyxobacter sp. (strain K).